The primary structure comprises 97 residues: Exodeoxyribonuclease 7 small subunit (97 aa).

The segment at 1 to 22 (MAKTASPGATPPGNGTEPLPDN) is disordered.

This sequence belongs to the XseB family. Heterooligomer composed of large and small subunits.

It localises to the cytoplasm. It catalyses the reaction Exonucleolytic cleavage in either 5'- to 3'- or 3'- to 5'-direction to yield nucleoside 5'-phosphates.. Functionally, bidirectionally degrades single-stranded DNA into large acid-insoluble oligonucleotides, which are then degraded further into small acid-soluble oligonucleotides. The sequence is that of Exodeoxyribonuclease 7 small subunit from Burkholderia lata (strain ATCC 17760 / DSM 23089 / LMG 22485 / NCIMB 9086 / R18194 / 383).